Reading from the N-terminus, the 304-residue chain is MERANHSVVSEFILLGLSKSQNLQILFFLGFSVVFVGIVLGNLLILVTVTFDSLLHTPMYFLLSNLSCIDMILASFATPKMIVDFLRERKTISWWGCYSQMFFMHLLGGSEMMLLVAMAIDRYVAICKPLHYMTIMSPRVLTGLLLSSYAVGFVHSSSQMAFMLTLPFCGPNVIDSFFCDLPLVIKLACKDTYILQLLVIADSGLLSLVCFLLLLVSYGVIIFSVRYRAASRSSKAFSTLSAHITVVTLFFAPCVFIYVWPFSRYSVDKILSVFYTIFTPLLNPIIYTLRNQEVKAAIKKRLCI.

Residues 1–25 (MERANHSVVSEFILLGLSKSQNLQI) are Extracellular-facing. N5 carries N-linked (GlcNAc...) asparagine glycosylation. The chain crosses the membrane as a helical span at residues 26-49 (LFFLGFSVVFVGIVLGNLLILVTV). Residues 50–57 (TFDSLLHT) lie on the Cytoplasmic side of the membrane. A helical membrane pass occupies residues 58–79 (PMYFLLSNLSCIDMILASFATP). The Extracellular segment spans residues 80-100 (KMIVDFLRERKTISWWGCYSQ). C97 and C189 are oxidised to a cystine. The helical transmembrane segment at 101–120 (MFFMHLLGGSEMMLLVAMAI) threads the bilayer. The Cytoplasmic portion of the chain corresponds to 121-139 (DRYVAICKPLHYMTIMSPR). Residues 140-158 (VLTGLLLSSYAVGFVHSSS) form a helical membrane-spanning segment. The Extracellular portion of the chain corresponds to 159 to 195 (QMAFMLTLPFCGPNVIDSFFCDLPLVIKLACKDTYIL). A helical transmembrane segment spans residues 196–219 (QLLVIADSGLLSLVCFLLLLVSYG). The Cytoplasmic segment spans residues 220-235 (VIIFSVRYRAASRSSK). Residues 236 to 258 (AFSTLSAHITVVTLFFAPCVFIY) form a helical membrane-spanning segment. The Extracellular portion of the chain corresponds to 259–269 (VWPFSRYSVDK). Residues 270–289 (ILSVFYTIFTPLLNPIIYTL) traverse the membrane as a helical segment. Topologically, residues 290–304 (RNQEVKAAIKKRLCI) are cytoplasmic.

Belongs to the G-protein coupled receptor 1 family.

Its subcellular location is the cell membrane. In terms of biological role, odorant receptor. The chain is Olfactory receptor 4K13 (OR4K13) from Homo sapiens (Human).